A 545-amino-acid chain; its full sequence is Membrane protein insertase YidC (545 aa).

Transmembrane regions (helical) follow at residues 350–370 (IIGN…AVLY), 424–444 (LPML…FASV), 461–481 (ADPY…QTYL), and 498–518 (PLVF…YWVI).

This sequence belongs to the OXA1/ALB3/YidC family. Type 1 subfamily. As to quaternary structure, interacts with the Sec translocase complex via SecD. Specifically interacts with transmembrane segments of nascent integral membrane proteins during membrane integration.

Its subcellular location is the cell inner membrane. Functionally, required for the insertion and/or proper folding and/or complex formation of integral membrane proteins into the membrane. Involved in integration of membrane proteins that insert both dependently and independently of the Sec translocase complex, as well as at least some lipoproteins. Aids folding of multispanning membrane proteins. The chain is Membrane protein insertase YidC from Neisseria meningitidis serogroup A / serotype 4A (strain DSM 15465 / Z2491).